The chain runs to 431 residues: tRNA(Ile)-lysidine synthase (431 aa).

25 to 30 contacts ATP; sequence SGGLDS.

The protein belongs to the tRNA(Ile)-lysidine synthase family.

The protein resides in the cytoplasm. The enzyme catalyses cytidine(34) in tRNA(Ile2) + L-lysine + ATP = lysidine(34) in tRNA(Ile2) + AMP + diphosphate + H(+). In terms of biological role, ligates lysine onto the cytidine present at position 34 of the AUA codon-specific tRNA(Ile) that contains the anticodon CAU, in an ATP-dependent manner. Cytidine is converted to lysidine, thus changing the amino acid specificity of the tRNA from methionine to isoleucine. This is tRNA(Ile)-lysidine synthase from Legionella pneumophila (strain Lens).